A 50-amino-acid chain; its full sequence is Sperm protamine P1 (50 aa).

Belongs to the protamine P1 family. Cross-linked by interchain disulfide bonds around the DNA-helix. Testis.

The protein resides in the nucleus. It localises to the chromosome. Protamines substitute for histones in the chromatin of sperm during the haploid phase of spermatogenesis. They compact sperm DNA into a highly condensed, stable and inactive complex. The polypeptide is Sperm protamine P1 (PRM1) (Pan paniscus (Pygmy chimpanzee)).